The following is a 782-amino-acid chain: Transcription factor SOX-30 (782 aa).

3 disordered regions span residues 1–37 (MERA…AQPV), 95–117 (LPPG…AAAA), and 139–226 (PPQS…DALK). 2 stretches are compositionally biased toward pro residues: residues 7-35 (EPPP…PPAQ) and 97-106 (PGGPGVPPAP). The segment covering 203 to 226 (LDGRRSDEKKAKLEAEEAPRDALK) has biased composition (basic and acidic residues). Residues 366-434 (VKRPMNAFMV…KHREEFPGWV (69 aa)) constitute a DNA-binding region (HMG box). Disordered stretches follow at residues 501-604 (PTPA…STCP), 704-724 (YPDE…DGPP), and 756-782 (ASAP…LRNL). Polar residues predominate over residues 512-522 (TLFQPSVSSTG). Pro residues predominate over residues 525–538 (AVPPPSLTPRPSLP). Polar residues predominate over residues 555–574 (SGSSRSVKRSTPGSLESTTR). The span at 704-718 (YPDEHTHSEDSRSCE) shows a compositional bias: basic and acidic residues.

As to quaternary structure, interacts with CTNNB1, competitively inhibiting CTNNB1-TCF7L2/TCF4 interaction. In terms of tissue distribution, expressed in the lung (at protein level). Expressed in testes (at protein level). Expressed in preleptotene spermatocytes, round spermatids, and elongated spermatids in the testis (at protein level). Expressed in pachytene spermatocytes during stages 3 to 8 of spermatogenesis (at protein level). Increased expression in diplotene spermatocytes at stage 9-11 and in metaphase spermatocytes or secondary spermatocytes at stage 12. Expressed in ovaries.

It localises to the nucleus. Its subcellular location is the cytoplasm. Acts both as a transcriptional activator and a repressor. Binds to the DNA sequence 5'-ACAAT-3' and shows a preference for guanine residues surrounding this core motif. Binds to its own promoter and activates its own transcription. Required to activate the expression of postmeiotic genes involved in spermiogenesis. Binds to the promoter region of CTNNB1 and represses its transcription which leads to inhibition of Wnt signaling. Also inhibits Wnt signaling by binding to the CTNNB1 protein, preventing interaction of CTNNB1 with TCF7L2/TCF4. This Mus musculus (Mouse) protein is Transcription factor SOX-30 (Sox30).